We begin with the raw amino-acid sequence, 63 residues long: Large ribosomal subunit protein bL28 (63 aa).

The protein belongs to the bacterial ribosomal protein bL28 family.

This is Large ribosomal subunit protein bL28 from Treponema denticola (strain ATCC 35405 / DSM 14222 / CIP 103919 / JCM 8153 / KCTC 15104).